We begin with the raw amino-acid sequence, 82 residues long: Metallothionein-like protein 2A (82 aa).

This sequence belongs to the metallothionein superfamily. Type 15 family. As to expression, expressed in stems, leaves, rachis, inflorescences and seeds.

Its function is as follows. Metallothioneins have a high content of cysteine residues that bind various heavy metals. This chain is Metallothionein-like protein 2A (MT2A), found in Oryza sativa subsp. japonica (Rice).